The chain runs to 475 residues: Ankyrin repeat, SAM and basic leucine zipper domain-containing protein 1 (475 aa).

The tract at residues 1–25 (MAAGPLRGLAVAGGGESSDSEDDGW) is disordered. 3 positions are modified to phosphoserine: Ser17, Ser18, and Ser20. ANK repeat units follow at residues 45-74 (ERQE…SVDT), 78-107 (YGWT…NASF), 110-144 (DKQT…DPNV), 148-177 (RLMT…EVNT), 181-210 (NGYT…NKMI), and 214-243 (DGKT…PLEG). An SAM domain is found at 272 to 334 (SYTAFGDLEI…KIMAALKELE (63 aa)).

In terms of assembly, interacts with DDX4, PIWIL1, RANBP9 and TDRD1.

It is found in the cytoplasm. Its function is as follows. Plays a central role during spermatogenesis by repressing transposable elements and preventing their mobilization, which is essential for the germline integrity. Acts via the piRNA metabolic process, which mediates the repression of transposable elements during meiosis by forming complexes composed of piRNAs and Piwi proteins and governs the methylation and subsequent repression of transposons. Its association with pi-bodies suggests a participation in the primary piRNAs metabolic process. Required prior to the pachytene stage to facilitate the production of multiple types of piRNAs, including those associated with repeats involved in the regulation of retrotransposons. May act by mediating protein-protein interactions during germ cell maturation. In Bos taurus (Bovine), this protein is Ankyrin repeat, SAM and basic leucine zipper domain-containing protein 1 (ASZ1).